We begin with the raw amino-acid sequence, 64 residues long: Large ribosomal subunit protein bL28 (64 aa).

Positions 1 to 27 are disordered; the sequence is MAKRDQLTGKGPLSGNTRSHAMNHSKR.

It belongs to the bacterial ribosomal protein bL28 family.

This Ureaplasma parvum serovar 3 (strain ATCC 27815 / 27 / NCTC 11736) protein is Large ribosomal subunit protein bL28.